The sequence spans 493 residues: Probable NADPH:adrenodoxin oxidoreductase, mitochondrial (493 aa).

Ser26, Glu48, Leu56, and Ile100 together coordinate FAD. Residues Asn177 to Val180, Arg223 to Arg224, and Glu235 each bind NADP(+). FAD contacts are provided by residues Trp407 and Gly414–Ile416. Residue Gly414 coordinates NADP(+).

It belongs to the ferredoxin--NADP reductase type 1 family. FAD is required as a cofactor.

The protein resides in the mitochondrion inner membrane. It carries out the reaction 2 reduced [adrenodoxin] + NADP(+) + H(+) = 2 oxidized [adrenodoxin] + NADPH. In terms of biological role, adrenodoxin reductase transfers electrons from NADPH to adrenodoxin, which is involved in heme A biosynthesis and in iron-sulfur cluster assembly. Involved in the electron transfer to heme A synthase COX15, a heme protein that catalyzes the conversion of heme O to heme A. Required for the de novo synthesis of Fe-S clusters on iron sulfur cluster assembly protein ISU1. Involved in electron delivery for Fe-S cluster synthesis. Essential for coenzyme Q biosynthesis. May be involved in the electron transfer required for the hydroxylation reaction performed by COQ6. May play a role in cellular and mitochondrial iron homeostasis. This chain is Probable NADPH:adrenodoxin oxidoreductase, mitochondrial, found in Saccharomyces cerevisiae (strain ATCC 204508 / S288c) (Baker's yeast).